A 156-amino-acid polypeptide reads, in one-letter code: Small ribosomal subunit protein uS7 (156 aa).

This sequence belongs to the universal ribosomal protein uS7 family. Part of the 30S ribosomal subunit. Contacts proteins S9 and S11.

One of the primary rRNA binding proteins, it binds directly to 16S rRNA where it nucleates assembly of the head domain of the 30S subunit. Is located at the subunit interface close to the decoding center, probably blocks exit of the E-site tRNA. The polypeptide is Small ribosomal subunit protein uS7 (Rhizorhabdus wittichii (strain DSM 6014 / CCUG 31198 / JCM 15750 / NBRC 105917 / EY 4224 / RW1) (Sphingomonas wittichii)).